The following is a 284-amino-acid chain: Bifunctional protein FolD (284 aa).

NADP(+) is bound at residue 166–168 (GAS).

The protein belongs to the tetrahydrofolate dehydrogenase/cyclohydrolase family. As to quaternary structure, homodimer.

It carries out the reaction (6R)-5,10-methylene-5,6,7,8-tetrahydrofolate + NADP(+) = (6R)-5,10-methenyltetrahydrofolate + NADPH. The catalysed reaction is (6R)-5,10-methenyltetrahydrofolate + H2O = (6R)-10-formyltetrahydrofolate + H(+). It functions in the pathway one-carbon metabolism; tetrahydrofolate interconversion. Its function is as follows. Catalyzes the oxidation of 5,10-methylenetetrahydrofolate to 5,10-methenyltetrahydrofolate and then the hydrolysis of 5,10-methenyltetrahydrofolate to 10-formyltetrahydrofolate. This chain is Bifunctional protein FolD, found in Legionella pneumophila (strain Paris).